A 185-amino-acid chain; its full sequence is MINDVLKEAEDRMVKAVEALKREYATIRAGRANPNMLDKITVEYYGTQTPVNQLANISVPEPRMLTIQPWDKSSLPMIEKAILKSDLGLNPSSDGTVIRLLIPQLTAERRTEIVKTVKKKAEDSRVAVRNIRRDSNDELKKLEKDHTASEDEVKRAQDDVQKMTDKFVKEIDRIMGTKEKEIMEV.

Residues 138 to 157 (ELKKLEKDHTASEDEVKRAQ) form a disordered region.

The protein belongs to the RRF family.

The protein resides in the cytoplasm. In terms of biological role, responsible for the release of ribosomes from messenger RNA at the termination of protein biosynthesis. May increase the efficiency of translation by recycling ribosomes from one round of translation to another. This is Ribosome-recycling factor from Desulfitobacterium hafniense (strain DSM 10664 / DCB-2).